A 144-amino-acid polypeptide reads, in one-letter code: Large ribosomal subunit protein uL15 (144 aa).

Residues 1–54 (MHLNTLKPAEGAKKLAKRKGRGQGSGNGKMAGRGHKGQKSRSGGMPKIGFEGGQ) form a disordered region. A compositionally biased stretch (gly residues) spans 22–31 (GQGSGNGKMA).

Belongs to the universal ribosomal protein uL15 family. As to quaternary structure, part of the 50S ribosomal subunit.

Binds to the 23S rRNA. In Hydrogenovibrio crunogenus (strain DSM 25203 / XCL-2) (Thiomicrospira crunogena), this protein is Large ribosomal subunit protein uL15.